Here is a 127-residue protein sequence, read N- to C-terminus: MAIVGLGTDIVEIERIQAHVARAGDKLAKRVLTEAELAIYTAHSQPSRYLAKRFAAKEAAAKALGTGIGRGVSFQHIHIGNNEDGAPTIHFTEGALTRLQQLKATVGHISIADEKSYAIATVIIESQ.

Positions 9 and 58 each coordinate Mg(2+).

This sequence belongs to the P-Pant transferase superfamily. AcpS family. It depends on Mg(2+) as a cofactor.

The protein resides in the cytoplasm. It catalyses the reaction apo-[ACP] + CoA = holo-[ACP] + adenosine 3',5'-bisphosphate + H(+). Its function is as follows. Transfers the 4'-phosphopantetheine moiety from coenzyme A to a Ser of acyl-carrier-protein. This chain is Holo-[acyl-carrier-protein] synthase, found in Shewanella baltica (strain OS185).